A 188-amino-acid polypeptide reads, in one-letter code: MSVLPTPLANQLLIALPALSDPTFSRSVALICQHDENGAMGVLVNRPSEYTLGEVLSQMGIDTSDERLREQPVLSGGPVHPERGFVIHDDARAWDSSLEVGQGVYLTTSRDILEAMAAGDGPRNALVALGCAGWGAGQLEFELGENSWLTAPSDANVLFDTALEDRWQTAAGRIGVDLFRLTDYSGHA.

Belongs to the UPF0301 (AlgH) family.

The polypeptide is UPF0301 protein XC_1365 (Xanthomonas campestris pv. campestris (strain 8004)).